The sequence spans 197 residues: Small ribosomal subunit protein uS11m (197 aa).

Residues 43-52 (AAKEEVEKAE) are compositionally biased toward basic and acidic residues. The interval 43-66 (AAKEEVEKAETPAPAPSRSSFSIY) is disordered.

Belongs to the universal ribosomal protein uS11 family. Component of the mitochondrial ribosome small subunit (28S) which comprises a 12S rRNA and about 30 distinct proteins.

The protein resides in the mitochondrion. In Bos taurus (Bovine), this protein is Small ribosomal subunit protein uS11m (MRPS11).